The sequence spans 147 residues: MELHSLKAAEGSRKVRNRVGRGTSSGNGKTSGRGQKGQKSRSGGGVRPGFEGGQTELFRRMPKRGFLNVNRKEYAIVNLETLNRLEDGATVSAETLVAAKIVKDVKSGVKVLANGELTAKNLTVKVAKVSAAAKAAIEAAGGSVEEA.

Basic and acidic residues predominate over residues 1-13 (MELHSLKAAEGSR). The tract at residues 1–57 (MELHSLKAAEGSRKVRNRVGRGTSSGNGKTSGRGQKGQKSRSGGGVRPGFEGGQTEL) is disordered. 2 stretches are compositionally biased toward gly residues: residues 23–35 (TSSG…GRGQ) and 42–52 (SGGGVRPGFEG).

Belongs to the universal ribosomal protein uL15 family. In terms of assembly, part of the 50S ribosomal subunit.

Binds to the 23S rRNA. In Lactococcus lactis subsp. cremoris (strain MG1363), this protein is Large ribosomal subunit protein uL15.